Consider the following 359-residue polypeptide: Histidinol-phosphate aminotransferase (359 aa).

Lys217 bears the N6-(pyridoxal phosphate)lysine mark.

This sequence belongs to the class-II pyridoxal-phosphate-dependent aminotransferase family. Histidinol-phosphate aminotransferase subfamily. As to quaternary structure, homodimer. Pyridoxal 5'-phosphate serves as cofactor.

It carries out the reaction L-histidinol phosphate + 2-oxoglutarate = 3-(imidazol-4-yl)-2-oxopropyl phosphate + L-glutamate. It functions in the pathway amino-acid biosynthesis; L-histidine biosynthesis; L-histidine from 5-phospho-alpha-D-ribose 1-diphosphate: step 7/9. In Roseobacter denitrificans (strain ATCC 33942 / OCh 114) (Erythrobacter sp. (strain OCh 114)), this protein is Histidinol-phosphate aminotransferase.